We begin with the raw amino-acid sequence, 95 residues long: Large ribosomal subunit protein uL23 (95 aa).

It belongs to the universal ribosomal protein uL23 family. In terms of assembly, part of the 50S ribosomal subunit. Contacts protein L29, and trigger factor when it is bound to the ribosome.

In terms of biological role, one of the early assembly proteins it binds 23S rRNA. One of the proteins that surrounds the polypeptide exit tunnel on the outside of the ribosome. Forms the main docking site for trigger factor binding to the ribosome. The protein is Large ribosomal subunit protein uL23 of Levilactobacillus brevis (strain ATCC 367 / BCRC 12310 / CIP 105137 / JCM 1170 / LMG 11437 / NCIMB 947 / NCTC 947) (Lactobacillus brevis).